Reading from the N-terminus, the 864-residue chain is Dynamin-1 (864 aa).

The region spanning 28–294 is the Dynamin-type G domain; that stretch reads DLDLPQIAVV…LTNHIRDTLP (267 aa). The segment at 38–45 is G1 motif; it reads GGQSAGKS. GDP is bound by residues serine 41, glycine 43, lysine 44, serine 45, serine 46, arginine 59, and glycine 60. The interval 64-66 is G2 motif; that stretch reads VTR. The residue at position 80 (tyrosine 80) is a Phosphotyrosine. Tyrosine 125 bears the 3'-nitrotyrosine; alternate mark. The residue at position 125 (tyrosine 125) is a Phosphotyrosine; alternate. Residues 136–139 are G3 motif; sequence DLPG. The G4 motif stretch occupies residues 205 to 208; the sequence is TKLD. GDP-binding residues include lysine 206, aspartate 208, aspartate 211, asparagine 236, arginine 237, and glutamine 239. Residues 235 to 238 are G5 motif; it reads VNRS. Serine 306 and serine 347 each carry phosphoserine. Tyrosine 354 is subject to Phosphotyrosine. A Phosphoserine modification is found at serine 512. A PH domain is found at 519–625; it reads LVIRKGWLTI…WKASFLRAGV (107 aa). In terms of domain architecture, GED spans 659–750; sequence VETIRNLVDS…IIGDINTTTV (92 aa). Positions 767 to 864 are disordered; sequence SVPAGRRSPT…PESPRPPFDL (98 aa). Serine 774 carries the phosphoserine; by CDK5 modification. A Phosphoserine modification is found at serine 778. Arginine 796 is modified (omega-N-methylarginine). Serine 822 is modified (phosphoserine). The segment covering 825 to 843 has biased composition (pro residues); it reads PFGPPPQVPSRPNRAPPGV. A phosphoserine mark is found at serine 851 and serine 857.

The protein belongs to the TRAFAC class dynamin-like GTPase superfamily. Dynamin/Fzo/YdjA family. As to quaternary structure, homodimer; homodimerization is mediated by the dynamin-type G domain which promotes assembly-stimulated GTPase activity. Homo-tetramer formed from two dimers in the absence of lipid. Oligomerizes into a helical polymer that self-assembles around the vesicle membrane, when associated to the menbrane through lipid binding. Interacts (via C-terminal proline-rich domain (PRD)) with SNX9 (via SH3 domain); this interaction allows regulation of DNM1 self-assembly during late stages of endocytic vesicle formation and supports DNM1's early functions in accelerating clathrin-coated pits (CCPs) maturation in non neuronals cell. Interacts (via C-terminal proline-rich domain (PRD)) with MYO1E (via SH3 domain); this interaction regulates receptor-mediated endocytosis. Interacts with SNX33 (via SH3 domain); this interaction decreases DNM1-dependent endocytosis. Interacts with DIAPH1. Interacts with GRB2 (via SH3 domain); this interaction mediates disassembly of DNM1 polymers, therefore modulates self-assembly. Forms a complex with BIN1 (via SH3 domain) and SH3GL2 (via SH3 domain). Forms a complex with SH3GL2 (via SH3 domain) and AMPH (via SH3 domain). Forms a complex with SH3GL2 (via SH3 domain) and SYNJ1. Interacts with AMPH. Interacts (via C-terminal proline-rich domain (PRD)) with SYT1; this interaction facilitates vesicle fission during clathrin-mediated endocytosis (CME). Interacts (via C-terminal proline-rich domain (PRD)) with PLCG1 (via SH3 domain); this interaction stimulates the release of GDP from DNM1 and enhances DNM1-dependent endocytosis. Interacts with SNPH; this interaction inhibits the binding of DNM1 to AMPH and DNM1-receptor-mediated endocytosis. Interacts with CAV1. Interacts with SH3GLB1 (via SH3 domain). Interacts with PACSIN1 (via SH3 domain), PACSIN2 (via SH3 domain) and PACSIN3 (via SH3 domain). Interacts with UNC119; this interaction decreases DNM1's GTPase activity and affects DNM1's interaction with AMPH. Interacts (GTP-bound form) with DNAJC6; this interaction allows clathrin-coated vesicle (CCV) formation at the plasma membrane. In terms of processing, phosphorylation at Ser-774 by GSK3B/GSK3-beta leads to inactivation of receptor-mediated endocytosis in non-neuronal cells. Dephosphorylation at Ser-774, through the EGFR downstream signaling, leads to activation and regulates early stages of clathrin-mediated endocytosis (CME). Phosphorylated by CDK5 leading to synaptic vesicle endocytosis (SVE) activation. As to expression, brain-specific (peripheral sensory neurons).

Its subcellular location is the cytoplasmic vesicle. The protein localises to the clathrin-coated vesicle. It localises to the golgi apparatus. The protein resides in the cell membrane. It is found in the membrane. Its subcellular location is the clathrin-coated pit. The protein localises to the presynapse. It localises to the secretory vesicle. The protein resides in the chromaffin granule. It catalyses the reaction GTP + H2O = GDP + phosphate + H(+). Its function is as follows. Catalyzes the hydrolysis of GTP and utilizes this energy to mediate vesicle scission and participates in many forms of endocytosis, such as clathrin-mediated endocytosis or synaptic vesicle endocytosis as well as rapid endocytosis (RE). Associates to the membrane, through lipid binding, and self-assembles into rings and stacks of interconnected rings through oligomerization to form a helical polymer around the vesicle membrane leading to constriction of invaginated coated pits around their necks. Self-assembly of the helical polymer induces membrane tubules narrowing until the polymer reaches a length sufficient to trigger GTP hydrolysis. Depending on the curvature imposed on the tubules, membrane detachment from the helical polymer upon GTP hydrolysis can cause spontaneous hemifission followed by complete fission. May play a role in regulating early stages of clathrin-mediated endocytosis in non-neuronal cells through its activation by dephosphorylation via the signaling downstream of EGFR. Controls vesicle size at a step before fission, during formation of membrane pits, at hippocampal synapses. Controls plastic adaptation of the synaptic vesicle recycling machinery to high levels of activity. Mediates rapid endocytosis (RE), a Ca(2+)-dependent and clathrin- and K(+)-independent process in chromaffin cells. Microtubule-associated force-producing protein involved in producing microtubule bundles and able to bind and hydrolyze GTP. Through its interaction with DNAJC6, acts during the early steps of clathrin-coated vesicle (CCV) formation. The chain is Dynamin-1 (Dnm1) from Rattus norvegicus (Rat).